Here is a 1372-residue protein sequence, read N- to C-terminus: Capping protein, Arp2/3 and myosin-I linker protein 3 (1372 aa).

The interval 126-151 is disordered; it reads RGNADTPEGPRDTSPNSETSTSTTHS. The segment covering 138–151 has biased composition (low complexity); sequence TSPNSETSTSTTHS. LRR repeat units lie at residues 244 to 264, 274 to 295, 303 to 323, 335 to 357, 365 to 385, 392 to 413, 424 to 444, 455 to 475, 482 to 501, and 509 to 530; these read SLEE…QKLA, VLHA…SLSQ, GLTK…QALG, SLRY…NALY, ALVH…LGAL, HLTY…EAPP, TLSH…RALL, DLHL…ALQE, CVGS…LTLV, and SLKH…EEIL. 3 disordered regions span residues 865 to 900, 970 to 1003, and 1024 to 1372; these read TLSD…ELGT, KLRH…RQEN, and ESSS…PGTD. Residues 982–995 show a composition bias toward pro residues; that stretch reads PRTTPPGPGRPSMP. A necessary for localization at the cell membrane region spans residues 1040–1073; it reads SEAPLPPLQKKRRRGLFHFRRPRSFKGDRGPGSP. A compositionally biased stretch (basic residues) spans 1048–1063; the sequence is QKKRRRGLFHFRRPRS. The segment covering 1079–1098 has biased composition (pro residues); it reads LPPPPPPPPTQESPPSPDPP. A compositionally biased stretch (low complexity) spans 1099 to 1109; sequence SLGNNSSPCWS. Basic and acidic residues-rich tracts occupy residues 1163–1177 and 1219–1229; these read ERAK…REGP and RRAEATWHIAE. The segment covering 1233–1244 has biased composition (polar residues); the sequence is PNHSCQSPSPAS. The span at 1348-1361 shows a compositional bias: basic and acidic residues; that stretch reads QSCDKLEPDRRRPP.

This sequence belongs to the CARMIL family. Widely expressed, with much higher levels in fetal tissues than in adult ones. Up-regulated in certain cancer tissues.

The protein localises to the cytoplasm. The protein resides in the cell membrane. The chain is Capping protein, Arp2/3 and myosin-I linker protein 3 from Homo sapiens (Human).